Here is a 162-residue protein sequence, read N- to C-terminus: Transcription elongation factor GreA (162 aa).

A coiled-coil region spans residues 50-75 (YHAAREEQGHLESRIRQLQELLRTAK).

The protein belongs to the GreA/GreB family.

In terms of biological role, necessary for efficient RNA polymerase transcription elongation past template-encoded arresting sites. The arresting sites in DNA have the property of trapping a certain fraction of elongating RNA polymerases that pass through, resulting in locked ternary complexes. Cleavage of the nascent transcript by cleavage factors such as GreA or GreB allows the resumption of elongation from the new 3'terminus. GreA releases sequences of 2 to 3 nucleotides. This chain is Transcription elongation factor GreA, found in Saccharopolyspora erythraea (strain ATCC 11635 / DSM 40517 / JCM 4748 / NBRC 13426 / NCIMB 8594 / NRRL 2338).